The primary structure comprises 1722 residues: Signal-induced proliferation-associated 1-like protein 2 (1722 aa).

The span at 1-12 shows a compositional bias: basic and acidic residues; the sequence is MSDPRQSQEEKH. Disordered regions lie at residues 1–29 and 42–72; these read MSDP…RIMQ and NGNM…PAVP. The span at 45–56 shows a compositional bias: polar residues; sequence MGPTTSLNASNS. Position 148 is a phosphoserine (Ser-148). Residues 360–377 are compositionally biased toward polar residues; sequence GASAASQTQMPTGQTGNC. The interval 360–401 is disordered; sequence GASAASQTQMPTGQTGNCESPLGSKEDLNSKENLDADEGDGK. 2 positions are modified to phosphoserine: Ser-379 and Ser-383. Positions 383–401 are enriched in basic and acidic residues; that stretch reads SKEDLNSKENLDADEGDGK. Residues 595 to 812 enclose the Rap-GAP domain; sequence LLKLDEQGLS…RTRQEYLKDL (218 aa). Residues 950-1026 enclose the PDZ domain; it reads EMTLRRNGLG…VKVVIIQPHD (77 aa). Ser-1029 carries the post-translational modification Phosphoserine. 2 disordered regions span residues 1067–1245 and 1330–1360; these read HRVP…FGSG and EGSM…SKSS. Low complexity-rich tracts occupy residues 1093 to 1102 and 1119 to 1130; these read QQLLQQAQAA and SSPSNQSSSSDP. Basic and acidic residues-rich tracts occupy residues 1164 to 1183 and 1194 to 1217; these read DGAR…ETKW and YKER…HIGD. Low complexity predominate over residues 1219–1236; it reads SCSSHSSSNTLSSNTSSN. Ser-1244 carries the post-translational modification Phosphoserine. Over residues 1337 to 1360 the composition is skewed to low complexity; the sequence is SEISSHSSGSHHSGSPSAHCSKSS. Phosphoserine occurs at positions 1461, 1472, 1478, 1488, 1549, 1552, and 1591. Residues 1654 to 1712 adopt a coiled-coil conformation; the sequence is LTGKVNQLELILRQLQTDLRKEKQDKAVLQAEVQHLRQDNMRLQEESQTATAQLRKFTE.

In Homo sapiens (Human), this protein is Signal-induced proliferation-associated 1-like protein 2 (SIPA1L2).